Here is a 954-residue protein sequence, read N- to C-terminus: MAVQKDSNKSLSPLITQASERHWARLTEVWSEGLANLTAAQQQELKTVLGLSDYIANQLTRSPEWINALFADDLQQVERKLFDAQLREQLASATTEDMAKRLLRRFRNYQMVRFAWRDFLDYASLEESLLDLSALAEALVIGARDWLYKEMCVQYGTPMDKAGNPQPLLILGMGKLGGRELNFSSDIDLIFTFPEHGETVGGRRSLDNQQFFIRMGQRLVNLLDQITVDGFVFRVDMRLRPYGESGPLVVSFSGLEDYYQEQGRDWERYAMVKARSLGPWNHFSDELHSLLRPFVYRRYIDFSAIESLRKMKQLIAQEVRRRQLTDNIKLGAGGIREVEFVVQSFQLIRGGREPSLRQQSLFGAMDTLYSLGQFEYLAVDELKHSYLLLRRVENLLQAIDDKQTQTLPNNALDWARLCYVLDMTNEIDLRTHIEAAMAKIHRHFKATVGGEEGEEKAEHWTAQLWNVQQDDHAINLLAEQQIDDDKLWPLLSRWRETVTKRSIGPRGRETLDKLMPRLLDELLNQPSPSAAFEPVSKVLEQILTRTTYLELLCENPGARQQLVSLCCASPWIAVQLAKFPMLLDELIDPAHLYDTTSLDDYPSELRQYLLRVPEDDMEQQMEALRQFKLSQQLKIAAADVTGVLPVMQVSDHLTFLAEAIIEQVVMQAWQQVAVRHGVPSYLAESSDTGFAVIGYGKLGGIELGYGSDLDLVFLYEAPENMANSLTNGDRPIEVGHFYLKLAQRILHLFSTRTTSGELYEVDMRLRPSGASGLMVSEIARFGEYQAQEAWTWEHQALVRSRFVFGDNSLAVKFSQIRACVLEQSRDKDELKKAVREMRQKMRDHLLKVSEGEFDLKQSPGGITDIEFIAQYLVLANAHEYPELSIWSDNVRIFGVLAELELLPLMSAQHLTQSYCWLRDENHRLTLQQKSGKLAYADVAAHAERILAIYQAILE.

The segment at 1–452 is adenylyl removase; it reads MAVQKDSNKS…HFKATVGGEE (452 aa). The tract at residues 458 to 954 is adenylyl transferase; that stretch reads EHWTAQLWNV…ILAIYQAILE (497 aa).

It belongs to the GlnE family. Mg(2+) serves as cofactor.

It carries out the reaction [glutamine synthetase]-O(4)-(5'-adenylyl)-L-tyrosine + phosphate = [glutamine synthetase]-L-tyrosine + ADP. The catalysed reaction is [glutamine synthetase]-L-tyrosine + ATP = [glutamine synthetase]-O(4)-(5'-adenylyl)-L-tyrosine + diphosphate. Its function is as follows. Involved in the regulation of glutamine synthetase GlnA, a key enzyme in the process to assimilate ammonia. When cellular nitrogen levels are high, the C-terminal adenylyl transferase (AT) inactivates GlnA by covalent transfer of an adenylyl group from ATP to specific tyrosine residue of GlnA, thus reducing its activity. Conversely, when nitrogen levels are low, the N-terminal adenylyl removase (AR) activates GlnA by removing the adenylyl group by phosphorolysis, increasing its activity. The regulatory region of GlnE binds the signal transduction protein PII (GlnB) which indicates the nitrogen status of the cell. The sequence is that of Bifunctional glutamine synthetase adenylyltransferase/adenylyl-removing enzyme from Shewanella oneidensis (strain ATCC 700550 / JCM 31522 / CIP 106686 / LMG 19005 / NCIMB 14063 / MR-1).